The sequence spans 134 residues: Viral interleukin-8 homolog (134 aa).

The N-terminal stretch at 1 to 22 is a signal peptide; sequence MQALLLVLVLFIVQIYLLPGNG.

This sequence belongs to the intercrine alpha (chemokine CxC) family. Homodimer.

Its subcellular location is the secreted. Its function is as follows. Plays a role in the early phase of cytolytic infections presumably by recruiting host B or T-lymphocytes. The polypeptide is Viral interleukin-8 homolog (MDV078) (Gallus gallus (Chicken)).